Here is a 173-residue protein sequence, read N- to C-terminus: Acetyl-CoA decarbonylase/synthase complex subunit epsilon (173 aa).

The protein belongs to the CdhB family. In terms of assembly, heterotetramer of two alpha and two epsilon subunits. The ACDS complex is made up of alpha, epsilon, beta, gamma and delta subunits with a probable stoichiometry of (alpha(2)epsilon(2))(4)-beta(8)-(gamma(1)delta(1))(8).

The protein operates within one-carbon metabolism; methanogenesis from acetate. In terms of biological role, part of a complex that catalyzes the reversible cleavage of acetyl-CoA, allowing growth on acetate as sole source of carbon and energy. The alpha-epsilon subcomponent functions as a carbon monoxide dehydrogenase. The precise role of the epsilon subunit is unclear; it may have a stabilizing role within the alpha(2)epsilon(2) component and/or be involved in electron transfer to FAD during a potential FAD-mediated CO oxidation. The sequence is that of Acetyl-CoA decarbonylase/synthase complex subunit epsilon from Methanothermobacter thermautotrophicus (strain ATCC 29096 / DSM 1053 / JCM 10044 / NBRC 100330 / Delta H) (Methanobacterium thermoautotrophicum).